A 153-amino-acid polypeptide reads, in one-letter code: Cytochrome c-type biogenesis protein CcmE (153 aa).

At 1-7 (MKPRHKR) the chain is on the cytoplasmic side. The helical; Signal-anchor for type II membrane protein transmembrane segment at 8–28 (LAIAGGVLVAVGAIATLVLNA) threads the bilayer. At 29–153 (FQSNLVFFYS…SSQAATGDPR (125 aa)) the chain is on the periplasmic side. Heme-binding residues include His120 and Tyr124. The disordered stretch occupies residues 130–153 (AEALKRAKEGGQMQSSQAATGDPR). Over residues 141-153 (QMQSSQAATGDPR) the composition is skewed to polar residues.

This sequence belongs to the CcmE/CycJ family.

Its subcellular location is the cell inner membrane. Heme chaperone required for the biogenesis of c-type cytochromes. Transiently binds heme delivered by CcmC and transfers the heme to apo-cytochromes in a process facilitated by CcmF and CcmH. This chain is Cytochrome c-type biogenesis protein CcmE, found in Leptothrix cholodnii (strain ATCC 51168 / LMG 8142 / SP-6) (Leptothrix discophora (strain SP-6)).